Here is a 283-residue protein sequence, read N- to C-terminus: Elongation factor Ts (283 aa).

Positions 80–83 are involved in Mg(2+) ion dislocation from EF-Tu; it reads TDFV.

The protein belongs to the EF-Ts family.

It localises to the cytoplasm. Its function is as follows. Associates with the EF-Tu.GDP complex and induces the exchange of GDP to GTP. It remains bound to the aminoacyl-tRNA.EF-Tu.GTP complex up to the GTP hydrolysis stage on the ribosome. The sequence is that of Elongation factor Ts from Haemophilus influenzae (strain PittEE).